A 79-amino-acid chain; its full sequence is Acyl carrier protein (79 aa).

The 76-residue stretch at 2-77 (ADFEARVKEI…SAIDYVKTHV (76 aa)) folds into the Carrier domain. The residue at position 37 (serine 37) is an O-(pantetheine 4'-phosphoryl)serine.

This sequence belongs to the acyl carrier protein (ACP) family. Post-translationally, 4'-phosphopantetheine is transferred from CoA to a specific serine of apo-ACP by AcpS. This modification is essential for activity because fatty acids are bound in thioester linkage to the sulfhydryl of the prosthetic group.

The protein localises to the cytoplasm. The protein operates within lipid metabolism; fatty acid biosynthesis. In terms of biological role, carrier of the growing fatty acid chain in fatty acid biosynthesis. The protein is Acyl carrier protein of Endomicrobium trichonymphae.